The chain runs to 110 residues: RNA silencing suppressor (110 aa).

The basic stretch occupies residues 50-53 (RRRR). A C4-type zinc finger spans residues 60–81 (CERCYRVYPPLPFSKKCDNRTC).

This sequence belongs to the carlaviruses nucleic acid-binding protein family.

In terms of biological role, suppressor of viral-induced RNA silencing. The potential mechanism of action is based on sequestering siRNAs. The chain is RNA silencing suppressor from Helenium virus S (HelVS).